We begin with the raw amino-acid sequence, 336 residues long: tRNA N6-adenosine threonylcarbamoyltransferase (336 aa).

His-114 and His-118 together coordinate Fe cation. Residues 136 to 140 (LVSGG), Asp-169, Gly-182, Asp-186, and Asn-275 each bind substrate. Asp-301 contacts Fe cation.

This sequence belongs to the KAE1 / TsaD family. Requires Fe(2+) as cofactor.

The protein resides in the cytoplasm. The enzyme catalyses L-threonylcarbamoyladenylate + adenosine(37) in tRNA = N(6)-L-threonylcarbamoyladenosine(37) in tRNA + AMP + H(+). Required for the formation of a threonylcarbamoyl group on adenosine at position 37 (t(6)A37) in tRNAs that read codons beginning with adenine. Is involved in the transfer of the threonylcarbamoyl moiety of threonylcarbamoyl-AMP (TC-AMP) to the N6 group of A37, together with TsaE and TsaB. TsaD likely plays a direct catalytic role in this reaction. This is tRNA N6-adenosine threonylcarbamoyltransferase from Streptococcus pneumoniae (strain Hungary19A-6).